The sequence spans 81 residues: MGGNGIRALVGVIASLGLIVFLLVGILANSAPSVPSSENVKTLRFSGKDVNLFHVSKRKVPNGPDPIHNRKAETSRRPPRV.

The signal sequence occupies residues 1–30; the sequence is MGGNGIRALVGVIASLGLIVFLLVGILANS. A disordered region spans residues 57-81; it reads KRKVPNGPDPIHNRKAETSRRPPRV. P61 and P64 each carry hydroxyproline. A glycan (O-linked (Ara...) hydroxyproline) is linked at P64. Positions 67 to 81 are enriched in basic and acidic residues; sequence IHNRKAETSRRPPRV.

It belongs to the CLV3/ESR signal peptide family. Post-translationally, the O-glycosylation (arabinosylation) of the hydroxyproline Pro-64 enhances binding affinity of the CLE25p peptide for its receptor. Mostly expressed in flowers and siliques, and, to a lower extent, in roots, stems, apex, seedlings, leaves and pollen.

The protein localises to the secreted. The protein resides in the extracellular space. Functionally, extracellular signal peptide that regulates cell fate. Represses root apical meristem maintenance. Regulates the transition of protophloem cells from proliferation to differentiation, thus impinging on postembryonic growth capacity of the root meristem; this signaling pathway requires CRN and CLV2. In Arabidopsis thaliana (Mouse-ear cress), this protein is CLAVATA3/ESR (CLE)-related protein 25.